A 403-amino-acid polypeptide reads, in one-letter code: Aminomethyltransferase, mitochondrial (403 aa).

A mitochondrion-targeting transit peptide spans 1–28; sequence MQRAVSVVARLGFRLQAFPPALCRPLSC. Substrate-binding residues include Glu232, Arg261, and Tyr399.

The protein belongs to the GcvT family. The glycine cleavage system is composed of four proteins: P, T, L and H.

The protein resides in the mitochondrion. It catalyses the reaction N(6)-[(R)-S(8)-aminomethyldihydrolipoyl]-L-lysyl-[protein] + (6S)-5,6,7,8-tetrahydrofolate = N(6)-[(R)-dihydrolipoyl]-L-lysyl-[protein] + (6R)-5,10-methylene-5,6,7,8-tetrahydrofolate + NH4(+). Its function is as follows. The glycine cleavage system catalyzes the degradation of glycine. The chain is Aminomethyltransferase, mitochondrial from Homo sapiens (Human).